A 400-amino-acid chain; its full sequence is 11-beta-hydroxysteroid dehydrogenase type 2 (400 aa).

82–111 (TRAVLITGCDTGFGKETAKKLDAMGFTVLA) lines the NAD(+) pocket. Position 219 (Ser219) interacts with substrate. The Proton acceptor role is filled by Tyr232. Positions 378–400 (PGQPGPVHDTTQDPNPSPTVSAL) are disordered. Residues 389–400 (QDPNPSPTVSAL) show a composition bias toward polar residues.

It belongs to the short-chain dehydrogenases/reductases (SDR) family. As to quaternary structure, interacts with ligand-free cytoplasmic NR3C2. In terms of tissue distribution, highly expressed in kidney, adrenal gland and distal colon, and at much lower levels in lung, hypothalamus, hippocampus, and midbrain.

The protein resides in the microsome. It is found in the endoplasmic reticulum. The enzyme catalyses an 11beta-hydroxysteroid + NAD(+) = an 11-oxosteroid + NADH + H(+). It carries out the reaction corticosterone + NAD(+) = 11-dehydrocorticosterone + NADH + H(+). It catalyses the reaction 11beta,17beta-dihydroxyandrost-4-ene-3-one + NAD(+) = 17beta-hydroxyandrost-4-ene-3,11-dione + NADH + H(+). The catalysed reaction is 11beta-hydroxyandrost-4-ene-3,17-dione + NAD(+) = androst-4-ene-3,11,17-trione + NADH + H(+). It participates in steroid metabolism. With respect to regulation, inhibited by glycyrrhetinic acid. Induced by progesterone, through the Ihh signaling pathway. Catalyzes the conversion of biologically active 11beta-hydroxyglucocorticoids (11beta-hydroxysteroid) such as corticosterone, to inactive 11-ketoglucocorticoids (11-oxosteroid) such as 11-dehydrocorticosterone, in the presence of NAD(+). Functions as a dehydrogenase (oxidase), thereby decreasing the concentration of active glucocorticoids, thus protecting the nonselective mineralocorticoid receptor from occupation by glucocorticoids. Plays an important role in maintaining glucocorticoids balance during preimplantation and protects the fetus from excessive maternal corticosterone exposure. Catalyzes the oxidation of 11beta-hydroxytestosterone (11beta,17beta-dihydroxyandrost-4-ene-3-one) to 11-ketotestosterone (17beta-hydroxyandrost-4-ene-3,11-dione), a major bioactive androgen. Catalyzes the conversion of 11beta-hydroxyandrostenedione (11beta-hydroxyandrost-4-ene-3,17-dione) to 11-ketoandrostenedione (androst-4-ene-3,11,17-trione), which can be further metabolized to 11-ketotestosterone. Converts 7-beta-25-dihydroxycholesterol to 7-oxo-25-hydroxycholesterol in vitro. 7-beta-25-dihydroxycholesterol (not 7-oxo-25-hydroxycholesterol) acts as a ligand for the G-protein-coupled receptor (GPCR) Epstein-Barr virus-induced gene 2 (EBI2) and may thereby regulate immune cell migration. The protein is 11-beta-hydroxysteroid dehydrogenase type 2 (Hsd11b2) of Rattus norvegicus (Rat).